Here is a 281-residue protein sequence, read N- to C-terminus: 3-deoxy-manno-octulosonate cytidylyltransferase (281 aa).

This sequence belongs to the KdsB family.

It is found in the cytoplasm. The catalysed reaction is 3-deoxy-alpha-D-manno-oct-2-ulosonate + CTP = CMP-3-deoxy-beta-D-manno-octulosonate + diphosphate. The protein operates within nucleotide-sugar biosynthesis; CMP-3-deoxy-D-manno-octulosonate biosynthesis; CMP-3-deoxy-D-manno-octulosonate from 3-deoxy-D-manno-octulosonate and CTP: step 1/1. Its pathway is bacterial outer membrane biogenesis; lipopolysaccharide biosynthesis. In terms of biological role, activates KDO (a required 8-carbon sugar) for incorporation into bacterial lipopolysaccharide in Gram-negative bacteria. This chain is 3-deoxy-manno-octulosonate cytidylyltransferase, found in Xanthomonas campestris pv. campestris (strain B100).